Here is a 407-residue protein sequence, read N- to C-terminus: Lysosomal phospholipase A and acyltransferase (407 aa).

A signal peptide spans 1 to 29 (MGCLCLYRSTLLTGGLLFLLMLADPAFPA). Aspartate 41 contacts substrate. Cysteine 60 and cysteine 84 are disulfide-bonded. Asparagine 94 carries an N-linked (GlcNAc...) asparagine glycan. The active-site Acyl-ester intermediate is serine 193. Position 193 (serine 193) interacts with Zn(2+). Methionine 194 contacts substrate. Asparagine 284 carries N-linked (GlcNAc...) asparagine glycosylation. Active-site charge relay system residues include aspartate 355 and histidine 387. Residue histidine 387 participates in Zn(2+) binding. Asparagine 393 carries an N-linked (GlcNAc...) asparagine glycan.

Belongs to the AB hydrolase superfamily. Lipase family. Post-translationally, N-glycosylated. In terms of processing, N-glycosylated. N-glycosylation is important for maturation of the enzyme and normal subcellular location. In terms of tissue distribution, detected in brain (at protein level).

Its subcellular location is the lysosome. It is found in the secreted. The protein localises to the membrane. It catalyses the reaction a 1,2-diacyl-sn-glycero-3-phosphocholine + H2O = a 2-acyl-sn-glycero-3-phosphocholine + a fatty acid + H(+). The enzyme catalyses 1-hexadecanoyl-2-(9Z-octadecenoyl)-sn-glycero-3-phosphocholine + H2O = 2-(9Z-octadecenoyl)-sn-glycero-3-phosphocholine + hexadecanoate + H(+). The catalysed reaction is 1,2-di-(9Z-octadecenoyl)-sn-glycero-3-phosphocholine + H2O = 2-(9Z-octadecenoyl)-sn-glycero-3-phosphocholine + (9Z)-octadecenoate + H(+). It carries out the reaction 1-hexadecanoyl-2-glutaroyl-sn-glycero-3-phosphocholine + H2O = 2-glutaroyl-sn-glycero-3-phosphocholine + hexadecanoate + H(+). It catalyses the reaction 1-hexadecanoyl-2-nonadioyl-sn-glycero-3-phosphocholine + H2O = 2-nonadioyl-sn-glycero-3-phosphocholine + hexadecanoate + H(+). The enzyme catalyses 1-hexadecanoyl-2-(5-oxopentanoyl)-sn-glycero-3-phosphocholine + H2O = 2-(5-oxopentanoyl)-sn-glycero-3-phosphocholine + hexadecanoate + H(+). The catalysed reaction is 1-hexadecanoyl-2-(9-oxononanoyl)-sn-glycero-3-phosphocholine + H2O = 2-(9-oxononanoyl)-sn-glycero-3-phosphocholine + hexadecanoate + H(+). It carries out the reaction 1,2-dihexadecanoyl-sn-glycero-3-phosphocholine + H2O = 2-hexadecanoyl-sn-glycero-3-phosphocholine + hexadecanoate + H(+). It catalyses the reaction a 1,2-diacyl-sn-glycero-3-phosphocholine + H2O = a 1-acyl-sn-glycero-3-phosphocholine + a fatty acid + H(+). The enzyme catalyses 1-hexadecanoyl-2-(9Z-octadecenoyl)-sn-glycero-3-phosphocholine + H2O = 1-hexadecanoyl-sn-glycero-3-phosphocholine + (9Z)-octadecenoate + H(+). The catalysed reaction is 1,2-di-(9Z-octadecenoyl)-sn-glycero-3-phosphocholine + H2O = 1-(9Z-octadecenoyl)-sn-glycero-3-phosphocholine + (9Z)-octadecenoate + H(+). It carries out the reaction 1,2-dihexadecanoyl-sn-glycero-3-phosphocholine + H2O = 1-hexadecanoyl-sn-glycero-3-phosphocholine + hexadecanoate + H(+). It catalyses the reaction a 1-acyl-sn-glycero-3-phosphocholine + H2O = sn-glycerol 3-phosphocholine + a fatty acid + H(+). The enzyme catalyses 1-hexadecanoyl-sn-glycero-3-phosphocholine + H2O = sn-glycerol 3-phosphocholine + hexadecanoate + H(+). The catalysed reaction is N-(acetyl)-sphing-4-enine + a 1,2-diacyl-sn-glycero-3-phosphoethanolamine = 1-O-acyl-N-(acetyl)-sphing-4-enine + a 2-acyl-sn-glycero-3-phosphoethanolamine. It carries out the reaction 1-hexadecanoyl-2-(9Z-octadecenoyl)-sn-glycero-3-phosphoethanolamine + N-(acetyl)-sphing-4-enine = 2-(9Z-octadecenoyl)-sn-glycero-3-phosphoethanolamine + 1-hexadecanoyl-N-(acetyl)-sphing-4-enine. It catalyses the reaction 1-hexadecanoyl-2-(9Z,12Z-octadecadienoyl)-sn-glycero-3-phosphoethanolamine + N-(acetyl)-sphing-4-enine = 2-(9Z,12Z)-octadecadienoyl-sn-glycero-3-phosphoethanolamine + 1-hexadecanoyl-N-(acetyl)-sphing-4-enine. The enzyme catalyses 1-hexadecanoyl-2-(5Z,8Z,11Z,14Z-eicosatetraenoyl)-sn-glycero-3-phosphoethanolamine + N-(acetyl)-sphing-4-enine = 2-(5Z,8Z,11Z,14Z)-eicosatetraenoyl-sn-glycero-3-phosphoethanolamine + 1-hexadecanoyl-N-(acetyl)-sphing-4-enine. The catalysed reaction is N-(acetyl)-sphing-4-enine + a 1,2-diacyl-sn-glycero-3-phosphoethanolamine = 1-O-acyl-N-(acetyl)-sphing-4-enine + a 1-acyl-sn-glycero-3-phosphoethanolamine. It carries out the reaction 1-hexadecanoyl-2-(9Z-octadecenoyl)-sn-glycero-3-phosphoethanolamine + N-(acetyl)-sphing-4-enine = 1-(9Z-octadecenoyl)-N-(acetyl)-sphing-4-enine + 1-hexadecanoyl-sn-glycero-3-phosphoethanolamine. It catalyses the reaction 1-hexadecanoyl-2-(9Z,12Z-octadecadienoyl)-sn-glycero-3-phosphoethanolamine + N-(acetyl)-sphing-4-enine = 1-(9Z,12Z-octadecadienoyl)-N-acetylsphing-4-enine + 1-hexadecanoyl-sn-glycero-3-phosphoethanolamine. The enzyme catalyses 1-hexadecanoyl-2-(5Z,8Z,11Z,14Z-eicosatetraenoyl)-sn-glycero-3-phosphoethanolamine + N-(acetyl)-sphing-4-enine = 1-(5Z,8Z,11Z,14Z)-eicosatetraenoyl-N-(acetyl)-sphing-4-enine + 1-hexadecanoyl-sn-glycero-3-phosphoethanolamine. The catalysed reaction is N-(acetyl)-sphing-4-enine + a 1,2-diacyl-sn-glycero-3-phosphocholine = 1-O-acyl-N-(acetyl)-sphing-4-enine + a 2-acyl-sn-glycero-3-phosphocholine. It carries out the reaction 1-hexadecanoyl-2-(9Z-octadecenoyl)-sn-glycero-3-phosphocholine + N-(acetyl)-sphing-4-enine = 1-hexadecanoyl-N-(acetyl)-sphing-4-enine + 2-(9Z-octadecenoyl)-sn-glycero-3-phosphocholine. It catalyses the reaction 1-hexadecanoyl-2-(9Z,12Z-octadecadienoyl)-sn-glycero-3-phosphocholine + N-(acetyl)-sphing-4-enine = 2-(9Z,12Z-octadecadienoyl)-sn-glycero-3-phosphocholine + 1-hexadecanoyl-N-(acetyl)-sphing-4-enine. The enzyme catalyses 1-hexadecanoyl-2-(5Z,8Z,11Z,14Z-eicosatetraenoyl)-sn-glycero-3-phosphocholine + N-(acetyl)-sphing-4-enine = 1-hexadecanoyl-N-(acetyl)-sphing-4-enine + 2-(5Z,8Z,11Z,14Z)-eicosatetraenoyl-sn-glycero-3-phosphocholine. The catalysed reaction is 1-hexadecanoyl-2-(4Z,7Z,10Z,13Z,16Z,19Z-docosahexaenoyl)-sn-glycero-3-phosphocholine + N-(acetyl)-sphing-4-enine = 2-(4Z,7Z,10Z,13Z,16Z,19Z-docosahexaenoyl)-sn-glycero-3-phosphocholine + 1-hexadecanoyl-N-(acetyl)-sphing-4-enine. It carries out the reaction 1-hexadecanoyl-2-nonadioyl-sn-glycero-3-phosphocholine + N-(acetyl)-sphing-4-enine = 2-nonadioyl-sn-glycero-3-phosphocholine + 1-hexadecanoyl-N-(acetyl)-sphing-4-enine. It catalyses the reaction 1-octadecanoyl-2-(9Z-octadecenoyl)-sn-glycero-3-phosphocholine + N-(acetyl)-sphing-4-enine = 1-octadecanoyl-N-(acetyl)-sphing-4-enine + 2-(9Z-octadecenoyl)-sn-glycero-3-phosphocholine. The enzyme catalyses 1-(9Z)-octadecenoyl-2-octadecanoyl-sn-glycero-3-phosphocholine + N-(acetyl)-sphing-4-enine = 2-octadecanoyl-sn-glycero-3-phosphocholine + 1-(9Z-octadecenoyl)-N-(acetyl)-sphing-4-enine. The catalysed reaction is 1-octadecanoyl-2-(5Z,8Z,11Z,14Z-eicosatetraenoyl)-sn-glycero-3-phosphocholine + N-(acetyl)-sphing-4-enine = 1-octadecanoyl-N-(acetyl)-sphing-4-enine + 2-(5Z,8Z,11Z,14Z)-eicosatetraenoyl-sn-glycero-3-phosphocholine. It carries out the reaction 1-(9Z-octadecenoyl)-2-hexadecanoyl-sn-glycero-3-phosphocholine + N-(acetyl)-sphing-4-enine = 1-(9Z-octadecenoyl)-N-(acetyl)-sphing-4-enine + 2-hexadecanoyl-sn-glycero-3-phosphocholine. It catalyses the reaction N-(acetyl)-sphing-4-enine + a 1,2-diacyl-sn-glycero-3-phosphocholine = 1-O-acyl-N-(acetyl)-sphing-4-enine + a 1-acyl-sn-glycero-3-phosphocholine. The enzyme catalyses 1-hexadecanoyl-2-(9Z-octadecenoyl)-sn-glycero-3-phosphocholine + N-(acetyl)-sphing-4-enine = 1-(9Z-octadecenoyl)-N-(acetyl)-sphing-4-enine + 1-hexadecanoyl-sn-glycero-3-phosphocholine. The catalysed reaction is 1-hexadecanoyl-2-(9Z,12Z-octadecadienoyl)-sn-glycero-3-phosphocholine + N-(acetyl)-sphing-4-enine = 1-(9Z,12Z-octadecadienoyl)-N-acetylsphing-4-enine + 1-hexadecanoyl-sn-glycero-3-phosphocholine. It carries out the reaction 1-hexadecanoyl-2-(5Z,8Z,11Z,14Z-eicosatetraenoyl)-sn-glycero-3-phosphocholine + N-(acetyl)-sphing-4-enine = 1-(5Z,8Z,11Z,14Z)-eicosatetraenoyl-N-(acetyl)-sphing-4-enine + 1-hexadecanoyl-sn-glycero-3-phosphocholine. It catalyses the reaction 1-hexadecanoyl-2-(4Z,7Z,10Z,13Z,16Z,19Z-docosahexaenoyl)-sn-glycero-3-phosphocholine + N-(acetyl)-sphing-4-enine = 1-(4Z,7Z,10Z,13Z,16Z,19Z-docosahexaenoyl)-N-(acetyl)-sphing-4-enine + 1-hexadecanoyl-sn-glycero-3-phosphocholine. The enzyme catalyses 1-octadecanoyl-2-(9Z-octadecenoyl)-sn-glycero-3-phosphocholine + N-(acetyl)-sphing-4-enine = 1-(9Z-octadecenoyl)-N-(acetyl)-sphing-4-enine + 1-octadecanoyl-sn-glycero-3-phosphocholine. The catalysed reaction is 1-octadecanoyl-2-(9Z,12Z)-octadecadienoyl-sn-glycero-3-phosphocholine + N-(acetyl)-sphing-4-enine = 1-(9Z,12Z-octadecadienoyl)-N-acetylsphing-4-enine + 1-octadecanoyl-sn-glycero-3-phosphocholine. It carries out the reaction 1-(9Z-octadecenoyl)-2-hexadecanoyl-sn-glycero-3-phosphocholine + N-(acetyl)-sphing-4-enine = 1-hexadecanoyl-N-(acetyl)-sphing-4-enine + 1-(9Z-octadecenoyl)-sn-glycero-3-phosphocholine. It catalyses the reaction 1-(9Z)-octadecenoyl-2-octadecanoyl-sn-glycero-3-phosphocholine + N-(acetyl)-sphing-4-enine = 1-octadecanoyl-N-(acetyl)-sphing-4-enine + 1-(9Z-octadecenoyl)-sn-glycero-3-phosphocholine. The enzyme catalyses 1,2-di-(9Z-octadecenoyl)-sn-glycero-3-phosphocholine + N-(acetyl)-sphing-4-enine = 1-(9Z-octadecenoyl)-N-(acetyl)-sphing-4-enine + 1-(9Z-octadecenoyl)-sn-glycero-3-phosphocholine. The catalysed reaction is 1-octadecanoyl-2-(5Z,8Z,11Z,14Z-eicosatetraenoyl)-sn-glycero-3-phosphocholine + N-(acetyl)-sphing-4-enine = 1-(5Z,8Z,11Z,14Z)-eicosatetraenoyl-N-(acetyl)-sphing-4-enine + 1-octadecanoyl-sn-glycero-3-phosphocholine. It carries out the reaction a 1,2-diacyl-sn-glycero-3-phospho-L-serine + N-(acetyl)-sphing-4-enine = a 2-acyl-sn-glycero-3-phospho-L-serine + 1-O-acyl-N-(acetyl)-sphing-4-enine. It catalyses the reaction 1-octadecanoyl-2-(9Z-octadecenoyl)-sn-glycero-3-phospho-L-serine + N-(acetyl)-sphing-4-enine = 2-(9Z-octadecenoyl)-sn-glycero-3-phospho-L-serine + 1-octadecanoyl-N-(acetyl)-sphing-4-enine. The enzyme catalyses a 1,2-diacyl-sn-glycero-3-phospho-L-serine + N-(acetyl)-sphing-4-enine = 1-O-acyl-N-(acetyl)-sphing-4-enine + a 1-acyl-sn-glycero-3-phospho-L-serine. The catalysed reaction is 1-octadecanoyl-2-(9Z-octadecenoyl)-sn-glycero-3-phospho-L-serine + N-(acetyl)-sphing-4-enine = 1-octadecanoyl-sn-glycero-3-phosphoserine + 1-(9Z-octadecenoyl)-N-(acetyl)-sphing-4-enine. It carries out the reaction a 1,2-diacyl-sn-glycero-3-phospho-(1'-sn-glycerol) + N-(acetyl)-sphing-4-enine = 2-acyl-sn-glycero-3-phospho-(1'-sn-glycerol) + 1-O-acyl-N-(acetyl)-sphing-4-enine. It catalyses the reaction 1-octadecanoyl-2-(9Z-octadecenoyl)-sn-glycero-3-phospho-(1'-sn-glycerol) + N-(acetyl)-sphing-4-enine = 2-(9Z-octadecenoyl)-sn-glycero-3-phospho-(1'-sn-glycerol) + 1-octadecanoyl-N-(acetyl)-sphing-4-enine. The enzyme catalyses a 1,2-diacyl-sn-glycero-3-phospho-(1'-sn-glycerol) + N-(acetyl)-sphing-4-enine = 1-O-acyl-N-(acetyl)-sphing-4-enine + 1-acyl-sn-glycero-3-phospho-(1'-sn-glycerol). The catalysed reaction is 1-octadecanoyl-2-(9Z-octadecenoyl)-sn-glycero-3-phospho-(1'-sn-glycerol) + N-(acetyl)-sphing-4-enine = 1-octadecanoyl-sn-glycero-3-phospho-(1'-sn-glycerol) + 1-(9Z-octadecenoyl)-N-(acetyl)-sphing-4-enine. It carries out the reaction an N-acylethanolamine + a 1,2-diacyl-sn-glycero-3-phosphocholine = 2-(acylamino)ethyl fatty acid + a 2-acyl-sn-glycero-3-phosphocholine. It catalyses the reaction an N-acylethanolamine + a 1,2-diacyl-sn-glycero-3-phosphocholine = 2-(acylamino)ethyl fatty acid + a 1-acyl-sn-glycero-3-phosphocholine. The enzyme catalyses N-(5Z,8Z,11Z,14Z-eicosatetraenoyl)-ethanolamine + 1,2-di-(9Z-octadecenoyl)-sn-glycero-3-phosphocholine = 2-[(5Z,8Z,11Z,14Z)-eicosatetraenoylamino]ethyl (9Z)-octadecenoate + (9Z-octadecenoyl)-sn-glycero-3-phosphocholine. The catalysed reaction is N-(9Z-octadecenoyl) ethanolamine + 1,2-di-(9Z-octadecenoyl)-sn-glycero-3-phosphocholine = 2-[(9Z)-octadecenoylamino]ethyl (9Z)-octadecenoate + (9Z-octadecenoyl)-sn-glycero-3-phosphocholine. It carries out the reaction a 3-acyl-sn-glycerol + a 1,2-diacyl-sn-glycero-3-phosphocholine = a 1,3-diacylglycerol + a 1-acyl-sn-glycero-3-phosphocholine. It catalyses the reaction a 3-acyl-sn-glycerol + a 1,2-diacyl-sn-glycero-3-phosphocholine = a 1,3-diacylglycerol + a 2-acyl-sn-glycero-3-phosphocholine. The enzyme catalyses 3-(9Z-octadecenoyl)-sn-glycerol + 1,2-di-(9Z-octadecenoyl)-sn-glycero-3-phosphocholine = 1,3-di-(9Z-octadecenoyl)-glycerol + (9Z-octadecenoyl)-sn-glycero-3-phosphocholine. The catalysed reaction is 3-hexadecanoyl-sn-glycerol + 1,2-di-(9Z-octadecenoyl)-sn-glycero-3-phosphocholine = 1-(9Z)-octadecenoyl-3-hexadecanoyl-sn-glycerol + (9Z-octadecenoyl)-sn-glycero-3-phosphocholine. It carries out the reaction a 1-acyl-sn-glycerol + a 1,2-diacyl-sn-glycero-3-phosphocholine = a 1,3-diacylglycerol + a 2-acyl-sn-glycero-3-phosphocholine. It catalyses the reaction a 1-acyl-sn-glycerol + a 1,2-diacyl-sn-glycero-3-phosphocholine = a 1,3-diacylglycerol + a 1-acyl-sn-glycero-3-phosphocholine. The enzyme catalyses 1-(9Z-octadecenoyl)-sn-glycerol + 1,2-di-(9Z-octadecenoyl)-sn-glycero-3-phosphocholine = 1,3-di-(9Z-octadecenoyl)-glycerol + (9Z-octadecenoyl)-sn-glycero-3-phosphocholine. The catalysed reaction is 1-hexadecanoyl-sn-glycerol + 1,2-di-(9Z-octadecenoyl)-sn-glycero-3-phosphocholine = 1-hexadecanoyl-3-(9Z)-octadecenoyl-sn-glycerol + (9Z-octadecenoyl)-sn-glycero-3-phosphocholine. It carries out the reaction a 2-acylglycerol + a 1,2-diacyl-sn-glycero-3-phosphocholine = a 1,2-diacylglycerol + a 2-acyl-sn-glycero-3-phosphocholine. It catalyses the reaction a 2-acylglycerol + a 1,2-diacyl-sn-glycero-3-phosphocholine = a 1,2-diacylglycerol + a 1-acyl-sn-glycero-3-phosphocholine. The enzyme catalyses 2-hexadecanoylglycerol + 1,2-di-(9Z-octadecenoyl)-sn-glycero-3-phosphocholine = 1-(9Z)-octadecenoyl-2-hexadecanoylglycerol + (9Z-octadecenoyl)-sn-glycero-3-phosphocholine. The catalysed reaction is 1-O-alkylglycerol + a 1,2-diacyl-sn-glycero-3-phosphocholine = 1-O-alkyl-3-acylglycerol + a 1-acyl-sn-glycero-3-phosphocholine. It carries out the reaction 1-O-alkylglycerol + a 1,2-diacyl-sn-glycero-3-phosphocholine = 1-O-alkyl-3-acylglycerol + a 2-acyl-sn-glycero-3-phosphocholine. It catalyses the reaction 1-O-hexadecylglycerol + 1,2-di-(9Z-octadecenoyl)-sn-glycero-3-phosphocholine = 1-O-hexadecyl-3-(9Z)-octadecenoylglycerol + (9Z-octadecenoyl)-sn-glycero-3-phosphocholine. The enzyme catalyses 1-O-alkyl-2-acyl-sn-glycerol + a 1,2-diacyl-sn-glycero-3-phosphocholine = 1-O-alkyl-2,3-diacyl-sn-glycerol + a 2-acyl-sn-glycero-3-phosphocholine. The catalysed reaction is 1-O-alkyl-2-acyl-sn-glycerol + a 1,2-diacyl-sn-glycero-3-phosphocholine = 1-O-alkyl-2,3-diacyl-sn-glycerol + a 1-acyl-sn-glycero-3-phosphocholine. It carries out the reaction 1-O-hexadecyl-2-acetyl-sn-glycerol + 1,2-di-(9Z-octadecenoyl)-sn-glycero-3-phosphocholine = 1-O-hexadecyl-2-acetyl-3-(9Z)-octadecenoyl-sn-glycerol + (9Z-octadecenoyl)-sn-glycero-3-phosphocholine. It catalyses the reaction 1-O-hexadecyl-2-O-methyl-sn-glycerol + 1,2-di-(9Z-octadecenoyl)-sn-glycero-3-phosphocholine = 1-O-hexadecyl-2-O-methyl-3-(9Z)-octadecenoyl-sn-glycerol + (9Z-octadecenoyl)-sn-glycero-3-phosphocholine. The enzyme catalyses a 1,2-diacyl-sn-glycero-3-phosphoethanolamine + H2O = a 1-acyl-sn-glycero-3-phosphoethanolamine + a fatty acid + H(+). The catalysed reaction is 1-acyl-2-(5Z,8Z,11Z,14Z)-eicosatetraenoyl-sn-glycero-3-phosphoethanolamine + H2O = a 1-acyl-sn-glycero-3-phosphoethanolamine + (5Z,8Z,11Z,14Z)-eicosatetraenoate + H(+). It carries out the reaction a 1,2-diacyl-sn-glycero-3-phospho-(1'-sn-glycerol) + H2O = 1-acyl-sn-glycero-3-phospho-(1'-sn-glycerol) + a fatty acid + H(+). It catalyses the reaction 1-hexadecanoyl-2-(9Z-octadecenoyl)-sn-glycero-3-phospho-(1'-sn-glycerol) + H2O = 1-hexadecanoyl-sn-glycero-3-phospho-(1'-sn-glycerol) + (9Z)-octadecenoate + H(+). The enzyme catalyses a 1,2-diacyl-sn-glycero-3-phospho-(1'-sn-glycerol) + H2O = 2-acyl-sn-glycero-3-phospho-(1'-sn-glycerol) + a fatty acid + H(+). The catalysed reaction is 1-hexadecanoyl-2-(9Z-octadecenoyl)-sn-glycero-3-phospho-(1'-sn-glycerol) + H2O = 2-(9Z-octadecenoyl)-sn-glycero-3-phospho-(1'-sn-glycerol) + hexadecanoate + H(+). Its activity is regulated as follows. Transacylase activity is completely inhibited by Triton X-100 and partially inhibited by heparin. Moderately activated by Mg(2+) and Ca(2+). Functionally, has dual calcium-independent phospholipase and O-acyltransferase activities with a potential role in glycerophospholipid homeostasis and remodeling of acyl groups of lipophilic alcohols present in acidic cellular compartments. Catalyzes hydrolysis of the ester bond of the fatty acyl group attached at sn-1 or sn-2 position of phospholipids (phospholipase A1 or A2 activity) and transfer it to the hydroxyl group at the first carbon of lipophilic alcohols (O-acyltransferase activity). Among preferred fatty acyl donors are phosphatidylcholines, phosphatidylethanolamines, phosphatidylglycerols and phosphatidylserines. Favors sn-2 over sn-1 deacylation of unsaturated fatty acyl groups of phosphatidylcholines, phosphatidylethanolamines, and phosphatidylglycerols. Among preferred fatty acyl acceptors are natural lipophilic alcohols including short-chain ceramide N-acetyl-sphingosine (C2 ceramide), alkylacylglycerols, monoacylglycerols, and acylethanolamides such as anandamide and oleoylethanolamide. Selectively hydrolyzes the sn-1 fatty acyl group of truncated oxidized phospholipids and may play a role in detoxification of reactive oxidized phospholipids during oxidative stress. Required for normal phospholipid degradation in alveolar macrophages with potential implications in the clearance of pulmonary surfactant, which is mainly composed of dipalmitoylphosphatidylcholine (1,2-dihexadecanoyl-sn-glycero-3-phosphocholine). Involved in the first step of bis(monoacylglycero)phosphate (BMP) de novo synthesis from phosphatidylglycerol (1,2-diacyl-sn-glycero-3-phospho-(1'-sn-glycerol), PG). BMP is an important player in cargo sorting and degradation, regulation of cellular cholesterol levels and intercellular communication. At neutral pH, hydrolyzes the sn-1 fatty acyl group of the lysophosphatidylcholines. The protein is Lysosomal phospholipase A and acyltransferase (PLA2G15) of Bos taurus (Bovine).